The sequence spans 382 residues: MIOREX complex component 5 (382 aa).

A mitochondrion-targeting transit peptide spans 1–12; the sequence is MRRTFSQLATRL.

As to quaternary structure, associates with the mitochondrial ribosome.

It is found in the mitochondrion. Component of MIOREX complexes, large expressome-like assemblies of ribosomes with factors involved in all the steps of post-transcriptional gene expression. The chain is MIOREX complex component 5 from Saccharomyces cerevisiae (strain ATCC 204508 / S288c) (Baker's yeast).